A 333-amino-acid chain; its full sequence is Phosphate acyltransferase (333 aa).

The protein belongs to the PlsX family. As to quaternary structure, homodimer. Probably interacts with PlsY.

The protein resides in the cytoplasm. It catalyses the reaction a fatty acyl-[ACP] + phosphate = an acyl phosphate + holo-[ACP]. The protein operates within lipid metabolism; phospholipid metabolism. Its function is as follows. Catalyzes the reversible formation of acyl-phosphate (acyl-PO(4)) from acyl-[acyl-carrier-protein] (acyl-ACP). This enzyme utilizes acyl-ACP as fatty acyl donor, but not acyl-CoA. The protein is Phosphate acyltransferase of Lactobacillus helveticus (strain DPC 4571).